The primary structure comprises 704 residues: Protein cueball (704 aa).

Positions 1 to 26 (MKSPCRAAAGWLVLLLSSCCLGYVIA) are cleaved as a signal peptide. Over 27 to 594 (TEWAAAVTTD…TYCKESFNRT (568 aa)) the chain is Extracellular. LDL-receptor class B repeat units follow at residues 69–119 (GKLY…DHLE), 120–166 (RRLY…EATT), 199–242 (RHLY…DHYR), and 243–288 (NRLY…KNDY). N-linked (GlcNAc...) asparagine glycosylation is found at Asn-152 and Asn-219. 3 consecutive EGF-like domains span residues 363–397 (TQQQGQLTVCLNNGTVNHHTNTCLCQPAFGGKLCE), 432–478 (DRNR…ARCE), and 514–551 (EEYSCNNYCLNGGHCTLGNETTVPECECGEEFAGQRCE). Disulfide bonds link Cys-372/Cys-385, Cys-387/Cys-396, Cys-436/Cys-446, Cys-440/Cys-465, Cys-467/Cys-477, Cys-518/Cys-528, Cys-522/Cys-539, and Cys-541/Cys-550. N-linked (GlcNAc...) asparagine glycosylation occurs at Asn-375. Asn-450 carries an N-linked (GlcNAc...) asparagine glycan. Asn-532 is a glycosylation site (N-linked (GlcNAc...) asparagine). Residue Asn-592 is glycosylated (N-linked (GlcNAc...) asparagine). The chain crosses the membrane as a helical span at residues 595 to 615 (VVYTSLCFTVSFALLLAVVLV). Over 616-704 (VSRMMKPPRP…NCGDGTAERK (89 aa)) the chain is Cytoplasmic.

Belongs to the cueball family.

It localises to the cell membrane. Has a role in spermatogenesis and oogenesis. This Anopheles gambiae (African malaria mosquito) protein is Protein cueball.